The chain runs to 337 residues: Vegetative-specific protein H5 (337 aa).

Positions 88–90 match the Involved in the stabilization of the negatively charged intermediate by the formation of the oxyanion hole motif; it reads HGG. Residues serine 161, aspartate 261, and histidine 291 contribute to the active site.

The protein belongs to the 'GDXG' lipolytic enzyme family.

This is Vegetative-specific protein H5 (cinB) from Dictyostelium discoideum (Social amoeba).